The chain runs to 635 residues: DNA mismatch repair protein MutL (635 aa).

Residues 359–399 are disordered; the sequence is GTNKYAQPEAAKSSAAEQAVARERSSARERAAPAYKEDHPY. Residues 364-377 show a composition bias toward low complexity; that stretch reads AQPEAAKSSAAEQA. The span at 378–399 shows a compositional bias: basic and acidic residues; sequence VARERSSARERAAPAYKEDHPY.

It belongs to the DNA mismatch repair MutL/HexB family.

In terms of biological role, this protein is involved in the repair of mismatches in DNA. It is required for dam-dependent methyl-directed DNA mismatch repair. May act as a 'molecular matchmaker', a protein that promotes the formation of a stable complex between two or more DNA-binding proteins in an ATP-dependent manner without itself being part of a final effector complex. This Yersinia pseudotuberculosis serotype O:1b (strain IP 31758) protein is DNA mismatch repair protein MutL.